We begin with the raw amino-acid sequence, 1101 residues long: Protein unc-13 homolog (1101 aa).

The region spanning 663–804 (VSVFPAADSL…ASKDDLVPPV (142 aa)) is the MHD1 domain. One can recognise an MHD2 domain in the interval 941–1051 (QSRLEGLIEA…YETRELIDDL (111 aa)).

Belongs to the unc-13 family. Expressed in roots, cotyledons, leaves, stems and flowers. Expressed in guard cells and mesophyll cells of leaves.

The protein localises to the cytoplasm. The protein resides in the cell membrane. Controls the tethering of the proton ATPase AHA1 to the plasma membrane. Is essential for stomatal opening in response to low concentration of carbon dioxide and light. The sequence is that of Protein unc-13 homolog from Arabidopsis thaliana (Mouse-ear cress).